Consider the following 627-residue polypeptide: Nuclear receptor subfamily 4 group A member 3 (627 aa).

Positions 1-112 are activation function (AF)-1 domain; it reads MPCVQAQYSP…HHHHHHHHHQ (112 aa). The interval 1–139 is required for DNA-PK heterotrimer; the sequence is MPCVQAQYSP…PSTSMYFKQS (139 aa). The interval 1–292 is interaction with NCOA1, NCOA2, NCOA3 and KAT2B; the sequence is MPCVQAQYSP…NRSSSSGEGT (292 aa). Disordered stretches follow at residues 96–162 and 268–289; these read HGYH…DELP and ASSLLGESPSLPSPPNRSSSSG. Positions 97 to 112 are enriched in basic residues; the sequence is GYHHHHHHHHHHHHHQ. Residues 141–150 are compositionally biased toward pro residues; it reads PSTPTTPGFP. Over residues 269–288 the composition is skewed to low complexity; it reads SSLLGESPSLPSPPNRSSSS. Residues 290-365 constitute a DNA-binding region (nuclear receptor); sequence EGTCAVCGDN…VGMVKEVVRT (76 aa). NR C4-type zinc fingers lie at residues 293–313 and 329–353; these read CAVCGDNAACQHYGVRTCEGC and CLANKNCPVDKRRRNRCQYCRFQKC. Residues 365–395 are disordered; that stretch reads TDSLKGRRGRLPSKPKSPLQQEPSQPSPPSP. Over residues 378–388 the composition is skewed to low complexity; it reads KPKSPLQQEPS. The tract at residues 380–627 is interaction with KAT2B; that stretch reads KSPLQQEPSQ…DKLFLDTLPF (248 aa). In terms of domain architecture, NR LBD spans 395 to 624; that stretch reads PPICMMNALV…SVIDKLFLDT (230 aa).

Belongs to the nuclear hormone receptor family. NR4 subfamily. As to quaternary structure, interacts with SIX3 (via homeobox); differentially regulates the transcriptional activities of NR4A3. Interacts with NCOA2; potentiates the activity of the NR4A3. Interacts with NCOA1, NCOA3, MED1 and KAT2B. Interacts with EP300 and NCOA2; mediates the recruitment of MED1 in the coactivator complex. Interacts with the constituents of DNA-PK heterotrimer PRKDC, XRCC6 and XRCC5; phosphorylates and prevents NR4A3 ubiquitinylation and degradation. Interacts with NR3C1 (via nuclear receptor DNA-binding domain); the interactions represses transcription activity of NR4A3 on the POMC promoter Nur response element (NurRE). Interacts with TRIM28; the interactions potentiates NR4A3 activity on NurRE promoter. Binds DNA as a monomer and homodimer. Interacts with PARP1; activates PARP1 by improving acetylation of PARP1 and suppressing the interaction between PARP1 and SIRT1. Post-translationally, phosphorylated by PRKDC. As to expression, ubiquitous. Highest levels of expression in brain. Widely expressed throughout the arcuate nucleus region of the hypothalamus, namely in AgRP neurons.

It is found in the nucleus. Transcriptional activator that binds to regulatory elements in promoter regions in a cell- and response element (target)-specific manner. Induces gene expression by binding as monomers to the NR4A1 response element (NBRE) 5'-AAAAGGTCA-3' site and as homodimers to the Nur response element (NurRE) site in the promoter of their regulated target genes. Plays a role in the regulation of proliferation, survival and differentiation of many different cell types and also in metabolism and inflammation. Mediates proliferation of vascular smooth muscle, myeloid progenitor cell and type B pancreatic cells; promotes mitogen-induced vascular smooth muscle cell proliferation through transactivation of SKP2 promoter by binding a NBRE site. Upon PDGF stimulation, stimulates vascular smooth muscle cell proliferation by regulating CCND1 and CCND2 expression. In islets, induces type B pancreatic cell proliferation through up-regulation of genes that activate cell cycle, as well as genes that cause degradation of the CDKN1A. Negatively regulates myeloid progenitor cell proliferation by repressing RUNX1 in a NBRE site-independent manner. During inner ear, plays a role as a key mediator of the proliferative growth phase of semicircular canal development. Also mediates survival of neuron and smooth muscle cells; mediates CREB-induced neuronal survival, and during hippocampus development, plays a critical role in pyramidal cell survival and axonal guidance. Is required for S phase entry of the cell cycle and survival of smooth muscle cells by inducing CCND1, resulting in RB1 phosphorylation. Binds to NBRE motif in CCND1 promoter, resulting in the activation of the promoter and CCND1 transcription. Also plays a role in inflammation; upon TNF stimulation, mediates monocyte adhesion by inducing the expression of VCAM1 and ICAM1 by binding to the NBRE consensus site. In mast cells activated by Fc-epsilon receptor cross-linking, promotes the synthesis and release of cytokines but impairs events leading to degranulation. Also plays a role in metabolism; by modulating feeding behavior; and by playing a role in energy balance by inhibiting the glucocorticoid-induced orexigenic neuropeptides AGRP expression, at least in part by forming a complex with activated NR3C1 on the AGRP- glucocorticoid response element (GRE), and thus weakening the DNA binding activity of NR3C1. Upon catecholamines stimulation, regulates gene expression that controls oxidative metabolism in skeletal muscle. Plays a role in glucose transport by regulating translocation of the SLC2A4 glucose transporter to the cell surface. Finally, during gastrulation plays a crucial role in the formation of anterior mesoderm by controlling cell migration. Inhibits adipogenesis. Also participates in cardiac hypertrophy by activating PARP1. This chain is Nuclear receptor subfamily 4 group A member 3 (Nr4a3), found in Mus musculus (Mouse).